Reading from the N-terminus, the 169-residue chain is Myosin regulatory light chain 11 (169 aa).

Ala2 bears the N,N,N-trimethylalanine mark. Ser15 and Ser16 each carry phosphoserine. 2 positions are modified to phosphothreonine: Thr25 and Thr35. One can recognise an EF-hand 1 domain in the interval 25–60; it reads TQIQEFKEAFTVIDQNRDGIIDKEDLRDTFAAMGRL. Ca(2+) contacts are provided by Asp38, Asn40, Asp42, and Asp49. At Ser75 the chain carries Phosphoserine. 2 EF-hand domains span residues 95–130 and 131–166; these read DPED…QCDR and FSQE…GDAK. Residue Thr101 is modified to Phosphothreonine.

In terms of assembly, myosin is a hexamer of 2 heavy chains and 4 light chains.

Its function is as follows. Myosin regulatory subunit that plays an essential role to maintain muscle integrity during early development. Plays a role in regulation of muscle contraction. This Mus musculus (Mouse) protein is Myosin regulatory light chain 11 (Myl11).